We begin with the raw amino-acid sequence, 237 residues long: MSTSESSNNGSQPGNQDTGYIPGDDTWTQWRNIFSILAGRMTDEGKEQFRVARDIRNEVADCKRCEDQRDYLLQFSPIIRFMSDSIRQLGGDLHSHNIYCRRCTNRKAGGFDPDYGILICANEMKDQGHLEDTMAHEMVHAYDHLRFKVDWMNNLRHAACTEIRASSLSGECRWAREFFRRGQWKFTQQHQECVRRRAILSVRARPGCKDEAHAEKVVNEVWDSCFRDTRPFDEIYR.

The segment covering 1 to 18 has biased composition (polar residues); sequence MSTSESSNNGSQPGNQDT. Residues 1 to 24 form a disordered region; that stretch reads MSTSESSNNGSQPGNQDTGYIPGD. Histidine 136 serves as a coordination point for a divalent metal cation. The active site involves glutamate 137. Histidine 140 is an a divalent metal cation binding site.

Belongs to the peptidase M76 family.

It localises to the mitochondrion inner membrane. Its function is as follows. Has a dual role in the assembly of mitochondrial ATPase. Acts as a protease that removes N-terminal residues of mitochondrial ATPase CF(0) subunit 6 at the intermembrane space side. Also involved in the correct assembly of the membrane-embedded ATPase CF(0) particle, probably mediating association of subunit 6 with the subunit 9 ring. This is Mitochondrial inner membrane protease atp23 (atp23) from Aspergillus niger (strain ATCC MYA-4892 / CBS 513.88 / FGSC A1513).